Here is a 66-residue protein sequence, read N- to C-terminus: Conotoxin Bu1.4 (66 aa).

The N-terminal stretch at 1-23 is a signal peptide; the sequence is MGMRMRMMFTVFLLVVLANTVVS. Positions 24–46 are excised as a propeptide; the sequence is FPSDRDSDGADAEASDEPVEFER. A disordered region spans residues 25–48; it reads PSDRDSDGADAEASDEPVEFERDE. Positions 32–42 are enriched in acidic residues; sequence GADAEASDEPV. Intrachain disulfides connect C51-C57 and C52-C62. T63 bears the Threonine amide mark.

Belongs to the conotoxin A superfamily. As to expression, expressed by the venom duct.

It localises to the secreted. This Conus bullatus (Bubble cone) protein is Conotoxin Bu1.4.